The following is a 258-amino-acid chain: Aspartate/glutamate leucyltransferase (258 aa).

Belongs to the R-transferase family. Bpt subfamily.

It localises to the cytoplasm. The enzyme catalyses N-terminal L-glutamyl-[protein] + L-leucyl-tRNA(Leu) = N-terminal L-leucyl-L-glutamyl-[protein] + tRNA(Leu) + H(+). It catalyses the reaction N-terminal L-aspartyl-[protein] + L-leucyl-tRNA(Leu) = N-terminal L-leucyl-L-aspartyl-[protein] + tRNA(Leu) + H(+). Functionally, functions in the N-end rule pathway of protein degradation where it conjugates Leu from its aminoacyl-tRNA to the N-termini of proteins containing an N-terminal aspartate or glutamate. The protein is Aspartate/glutamate leucyltransferase of Rhodopseudomonas palustris (strain ATCC BAA-98 / CGA009).